The following is a 1606-amino-acid chain: Fatty acid synthase apf5 (1606 aa).

The region spanning 142 to 218 (VPVSAILISL…ETLSTSHDGQ (77 aa)) is the Carrier domain. At S177 the chain carries O-(pantetheine 4'-phosphoryl)serine. In terms of domain architecture, Ketosynthase family 3 (KS3) spans 996–1539 (KESLIEVALQ…QKGGQALLVH (544 aa)). Active-site for beta-ketoacyl synthase activity residues include C1182, H1424, and H1465.

Belongs to the thiolase-like superfamily. Fungal fatty acid synthetase subunit alpha family.

It catalyses the reaction a fatty acyl-[ACP] + malonyl-[ACP] + H(+) = a 3-oxoacyl-[ACP] + holo-[ACP] + CO2. Its pathway is secondary metabolite biosynthesis. Fatty acid synthase; part of the gene cluster that mediates the biosynthesis of the cyclic tetrapeptide apicidin F (APF). The non-ribosomal peptide synthetase apf1 incorporates four different amino acids to produce apicidin F: L-phenylalanine, D-pipecolic acid (D-pip), N-methoxy-L-tryptophan and L-2-aminooctanedioic acid. L-Phenylalanine is the only proteinogenic amino acid directly used by apf1. The 3 other apf1 substrates are non-proteinogenic and have to be modified by other enzymes of the cluster. Lysine is converted to delta-1-pyrroline-5-carboxylate (P5C) which is reduced to L-pipecolic acid (L-pip) by apf3. L-pip is epimerized to D-pip, probably by apf1 activity, prior to incorporation. L-Tryptophan is N-oxidyzed by one of the cytochrome P450 monooxygenases (apf7 or apf8), and further methylated at the hydroxy group by the O-methyltransferase apf6 to yield N-methoxy-L-tryptophan. The synthesis of the fourth apf1 substrate is more complex. The fatty acid synthase apf5 is involved in the synthesis of the octanoic acid backbone of L-2-aminooctanedioic acid by fixing one acetyl-CoA unit and three malonyl-CoA units. Then one of the cytochrome P450 monooxygenases (apf7 or apf8) may oxidize this backbone to 2-oxooctanoic acid. The aminotransferase apf4 is predicted to catalyze the exchange of the keto group with an amino group. The next step would be the oxidation of 2-aminooctanoic acid by one of the cytochrome P450 monooxygenases (apf7 or apf8). The last step is the oxidation of 2-amino-8-hydroxyoctanoic acid to 2-aminooctanedioic acid is catalyzed by the FAD-dependent monooxygenase apf9. This Gibberella fujikuroi (strain CBS 195.34 / IMI 58289 / NRRL A-6831) (Bakanae and foot rot disease fungus) protein is Fatty acid synthase apf5.